We begin with the raw amino-acid sequence, 478 residues long: Alpha,alpha-trehalose-phosphate synthase [UDP-forming] (478 aa).

Positions 89 and 143 each coordinate D-glucose 6-phosphate. UDP is bound by residues Arg280 and Lys285. 2 residues coordinate UDP-alpha-D-glucose: Arg280 and Lys285. Position 318 (Arg318) interacts with D-glucose 6-phosphate. Residues Ile357 and 383–387 (LVSYE) contribute to the UDP site. UDP-alpha-D-glucose-binding positions include Ile357 and 379-387 (DGMNLVSYE).

It belongs to the glycosyltransferase 20 family.

The catalysed reaction is D-glucose 6-phosphate + UDP-alpha-D-glucose = alpha,alpha-trehalose 6-phosphate + UDP + H(+). It participates in carbohydrate biosynthesis. Inhibited by validoxylamine A, a non-reactive trehalose analog. In terms of biological role, synthase catalytic subunit of the trehalose synthase complex that catalyzes the production of trehalose from glucose-6-phosphate and UDP-alpha-D-glucose in a two step process. This is Alpha,alpha-trehalose-phosphate synthase [UDP-forming] from Candida albicans (strain SC5314 / ATCC MYA-2876) (Yeast).